We begin with the raw amino-acid sequence, 955 residues long: Alpha-1,4 glucan phosphorylase L isozyme, chloroplastic/amyloplastic (955 aa).

A chloroplast-targeting transit peptide spans 1 to 43 (MSRLSGITPRARDDRSQFQNPRLEIAVPDRTAGLQRTKRTLLV). Residues 522-550 (KVVTESEKDELEEKDTELEKDEDPVPAPI) form a disordered region. Acidic residues predominate over residues 528-545 (EKDELEEKDTELEKDEDP). At Lys-801 the chain carries N6-(pyridoxal phosphate)lysine.

The protein belongs to the glycogen phosphorylase family. The cofactor is pyridoxal 5'-phosphate.

The protein resides in the plastid. The protein localises to the chloroplast. Its subcellular location is the amyloplast. It catalyses the reaction [(1-&gt;4)-alpha-D-glucosyl](n) + phosphate = [(1-&gt;4)-alpha-D-glucosyl](n-1) + alpha-D-glucose 1-phosphate. Its function is as follows. Phosphorylase is an important allosteric enzyme in carbohydrate metabolism. Enzymes from different sources differ in their regulatory mechanisms and in their natural substrates. However, all known phosphorylases share catalytic and structural properties. The protein is Alpha-1,4 glucan phosphorylase L isozyme, chloroplastic/amyloplastic of Ipomoea batatas (Sweet potato).